The following is an 862-amino-acid chain: Genome polyprotein (862 aa).

G2 carries N-myristoyl glycine; by host lipidation.

The protein belongs to the picornaviruses polyprotein family. In terms of assembly, interacts with capsid protein VP1 and capsid protein VP3 to form heterotrimeric protomers. As to quaternary structure, interacts with capsid protein VP0, and capsid protein VP3 to form heterotrimeric protomers. Five protomers subsequently associate to form pentamers which serve as building blocks for the capsid. Interacts with capsid protein VP2, capsid protein VP3 and capsid protein VP4 following cleavage of capsid protein VP0. Interacts with capsid protein VP1 and capsid protein VP3 in the mature capsid. In terms of assembly, interacts with capsid protein VP0 and capsid protein VP1 to form heterotrimeric protomers. Five protomers subsequently associate to form pentamers which serve as building blocks for the capsid. Interacts with capsid protein VP4 in the mature capsid. Interacts with protein 2C; this interaction may be important for virion morphogenesis. As to quaternary structure, interacts with capsid protein VP1 and capsid protein VP3. Post-translationally, specific enzymatic cleavages in vivo by the viral proteases yield processing intermediates and the mature proteins. In terms of processing, myristoylation is required for the formation of pentamers during virus assembly. Further assembly of 12 pentamers and a molecule of genomic RNA generates the provirion. During virion maturation, immature virions are rendered infectious following cleavage of VP0 into VP4 and VP2. This maturation seems to be an autocatalytic event triggered by the presence of RNA in the capsid and it is followed by a conformational change infectious virion. Post-translationally, myristoylation is required during RNA encapsidation and formation of the mature virus particle.

Its subcellular location is the virion. It is found in the host cytoplasm. Its function is as follows. Forms an icosahedral capsid of pseudo T=3 symmetry with capsid proteins VP2 and VP3. The capsid is 300 Angstroms in diameter, composed of 60 copies of each capsid protein and enclosing the viral positive strand RNA genome. Capsid protein VP1 mainly forms the vertices of the capsid. Capsid protein VP1 interacts with host cell receptor to provide virion attachment to target host cells. This attachment induces virion internalization. Tyrosine kinases are probably involved in the entry process. After binding to its receptor, the capsid undergoes conformational changes. Capsid protein VP1 N-terminus (that contains an amphipathic alpha-helix) and capsid protein VP4 are externalized. Together, they shape a pore in the host membrane through which viral genome is translocated to host cell cytoplasm. Functionally, forms an icosahedral capsid of pseudo T=3 symmetry with capsid proteins VP2 and VP3. The capsid is 300 Angstroms in diameter, composed of 60 copies of each capsid protein and enclosing the viral positive strand RNA genome. Lies on the inner surface of the capsid shell. After binding to the host receptor, the capsid undergoes conformational changes. Capsid protein VP4 is released, Capsid protein VP1 N-terminus is externalized, and together, they shape a pore in the host membrane through which the viral genome is translocated into the host cell cytoplasm. In terms of biological role, component of immature procapsids, which is cleaved into capsid proteins VP4 and VP2 after maturation. Allows the capsid to remain inactive before the maturation step. The polypeptide is Genome polyprotein (Echovirus 16 (strain Harrington)).